The chain runs to 344 residues: Uroporphyrinogen decarboxylase (344 aa).

Residues Arg26 to Arg30, Phe45, Asp75, Tyr151, Ser206, and His320 each bind substrate.

This sequence belongs to the uroporphyrinogen decarboxylase family. Homodimer.

It localises to the cytoplasm. The enzyme catalyses uroporphyrinogen III + 4 H(+) = coproporphyrinogen III + 4 CO2. Its pathway is porphyrin-containing compound metabolism; protoporphyrin-IX biosynthesis; coproporphyrinogen-III from 5-aminolevulinate: step 4/4. In terms of biological role, catalyzes the decarboxylation of four acetate groups of uroporphyrinogen-III to yield coproporphyrinogen-III. The sequence is that of Uroporphyrinogen decarboxylase from Staphylococcus saprophyticus subsp. saprophyticus (strain ATCC 15305 / DSM 20229 / NCIMB 8711 / NCTC 7292 / S-41).